The primary structure comprises 673 residues: UvrABC system protein B (673 aa).

Residues 26 to 183 (EGLEDGLAHQ…RRLAELQYTR (158 aa)) form the Helicase ATP-binding domain. Residue 39–46 (GVTGSGKT) participates in ATP binding. Residues 92-115 (YYDYYQPEAYVPSSDTFIEKDASV) carry the Beta-hairpin motif. In terms of domain architecture, Helicase C-terminal spans 431–597 (QVDDLLSEIR…GLNKKVVDIL (167 aa)). The region spanning 633-668 (QQKIHELEGQMMQHAQNLEFEEAAQIRDQLHQLREL) is the UVR domain.

This sequence belongs to the UvrB family. In terms of assembly, forms a heterotetramer with UvrA during the search for lesions. Interacts with UvrC in an incision complex.

Its subcellular location is the cytoplasm. Functionally, the UvrABC repair system catalyzes the recognition and processing of DNA lesions. A damage recognition complex composed of 2 UvrA and 2 UvrB subunits scans DNA for abnormalities. Upon binding of the UvrA(2)B(2) complex to a putative damaged site, the DNA wraps around one UvrB monomer. DNA wrap is dependent on ATP binding by UvrB and probably causes local melting of the DNA helix, facilitating insertion of UvrB beta-hairpin between the DNA strands. Then UvrB probes one DNA strand for the presence of a lesion. If a lesion is found the UvrA subunits dissociate and the UvrB-DNA preincision complex is formed. This complex is subsequently bound by UvrC and the second UvrB is released. If no lesion is found, the DNA wraps around the other UvrB subunit that will check the other stand for damage. The chain is UvrABC system protein B from Klebsiella pneumoniae subsp. pneumoniae (strain ATCC 700721 / MGH 78578).